The primary structure comprises 120 residues: NAD(P)H-quinone oxidoreductase subunit 3, chloroplastic (120 aa).

The next 3 helical transmembrane spans lie at 9 to 29 (IFWTFLIIASLIPILAFSISG), 64 to 84 (MFALVFVVFDVETVFLYPWAM), and 88 to 108 (VLGVSVFIEALIFVLILVVGL).

This sequence belongs to the complex I subunit 3 family. NDH is composed of at least 16 different subunits, 5 of which are encoded in the nucleus.

The protein localises to the plastid. The protein resides in the chloroplast thylakoid membrane. It catalyses the reaction a plastoquinone + NADH + (n+1) H(+)(in) = a plastoquinol + NAD(+) + n H(+)(out). The enzyme catalyses a plastoquinone + NADPH + (n+1) H(+)(in) = a plastoquinol + NADP(+) + n H(+)(out). Functionally, NDH shuttles electrons from NAD(P)H:plastoquinone, via FMN and iron-sulfur (Fe-S) centers, to quinones in the photosynthetic chain and possibly in a chloroplast respiratory chain. The immediate electron acceptor for the enzyme in this species is believed to be plastoquinone. Couples the redox reaction to proton translocation, and thus conserves the redox energy in a proton gradient. This chain is NAD(P)H-quinone oxidoreductase subunit 3, chloroplastic, found in Hordeum vulgare (Barley).